Consider the following 219-residue polypeptide: tRNA (guanine-N(7)-)-methyltransferase (219 aa).

Residues Glu-46, Glu-71, Asn-100, and Asp-122 each contribute to the S-adenosyl-L-methionine site. The active site involves Asp-122. Substrate is bound by residues Lys-126, Asp-158, and 199–202 (TEYE).

The protein belongs to the class I-like SAM-binding methyltransferase superfamily. TrmB family.

It catalyses the reaction guanosine(46) in tRNA + S-adenosyl-L-methionine = N(7)-methylguanosine(46) in tRNA + S-adenosyl-L-homocysteine. It functions in the pathway tRNA modification; N(7)-methylguanine-tRNA biosynthesis. Functionally, catalyzes the formation of N(7)-methylguanine at position 46 (m7G46) in tRNA. The sequence is that of tRNA (guanine-N(7)-)-methyltransferase from Leuconostoc citreum (strain KM20).